A 569-amino-acid polypeptide reads, in one-letter code: Hexose transporter HXT8 (569 aa).

The interval 1-38 is disordered; it reads MTDRKTNLPEEPIFEEAEDDGCPSIENSSHLSVPTVEE. Over 1-61 the chain is Cytoplasmic; sequence MTDRKTNLPE…EVVVPEKPAS (61 aa). A compositionally biased stretch (acidic residues) spans 12 to 21; sequence PIFEEAEDDG. The chain crosses the membrane as a helical span at residues 62–82; it reads AYATVSIMCLCMAFGGFMSGW. Over 83–118 the chain is Extracellular; that stretch reads DTGTISGFVNQTDFLRRFGNYSHSKNTYYLSNVRTG. N-linked (GlcNAc...) asparagine glycans are attached at residues Asn92 and Asn102. A helical membrane pass occupies residues 119–139; the sequence is LIVSIFNVGSAIGCLFLSKLG. Residues 140–145 are Cytoplasmic-facing; that stretch reads DIYGRC. A helical transmembrane segment spans residues 146-166; the sequence is MGLIIVIVVYMVGIVIQIASI. Topologically, residues 167–176 are extracellular; that stretch reads DKWYQYFIGR. A helical transmembrane segment spans residues 177–197; the sequence is IIAGIGAGSISVLAPMLISET. The Cytoplasmic segment spans residues 198–203; it reads APKHIR. The helical transmembrane segment at 204–224 threads the bilayer; sequence GTLLACWQLMVTFAIFLGYCT. The Extracellular segment spans residues 225-238; sequence NYGTKTYSNSVQWR. Residues 239–259 form a helical membrane-spanning segment; the sequence is VPLGLCFAWAIIMIGGMTFVP. Over 260–342 the chain is Cytoplasmic; sequence ESPRFLVQVG…INSLQQLTGD (83 aa). A helical transmembrane segment spans residues 343 to 359; it reads NYFFYYGTTIFKSVGMN. The Extracellular segment spans residues 360-365; sequence DSFETS. The helical transmembrane segment at 366–383 threads the bilayer; that stretch reads IVLGIVNFASCFFSLYSV. The Cytoplasmic portion of the chain corresponds to 384 to 390; sequence DKLGRRR. The helical transmembrane segment at 391 to 411 threads the bilayer; the sequence is CLLLGAATMTACMVIYASVGV. Over 412–433 the chain is Extracellular; that stretch reads TRLYPNGKSEPSSKGAGNCTIV. Residue Asn429 is glycosylated (N-linked (GlcNAc...) asparagine). The helical transmembrane segment at 434–454 threads the bilayer; that stretch reads FTCFYIFCFSCTWGPVCYVII. Residues 455-471 lie on the Cytoplasmic side of the membrane; it reads SETFPLRVRSKCMSVAT. A helical transmembrane segment spans residues 472–492; sequence AANLLWGFLIGFFTPFITSAI. Residue Asn493 is a topological domain, extracellular. The helical transmembrane segment at 494-514 threads the bilayer; sequence FYYGYVFMGCLAFSYFYVFFF. Residues 515–569 lie on the Cytoplasmic side of the membrane; the sequence is VPETKGLTLEEVDEMWMDGVLPWKSESWVPASRRDGDYDNEKLQHDEKPFYKRMF.

Belongs to the major facilitator superfamily. Sugar transporter (TC 2.A.1.1) family.

The protein resides in the membrane. Functionally, probable glucose transporter. This chain is Hexose transporter HXT8 (HXT8), found in Saccharomyces cerevisiae (strain ATCC 204508 / S288c) (Baker's yeast).